A 388-amino-acid polypeptide reads, in one-letter code: N5-carboxyaminoimidazole ribonucleotide synthase (388 aa).

ATP contacts are provided by residues lysine 105, lysine 140, 174–177 (ESFV), glutamate 182, and 267–268 (NE). The region spanning 109–297 (RHFLQNLGLP…QFALQLQAVT (189 aa)) is the ATP-grasp domain.

The protein belongs to the PurK/PurT family. As to quaternary structure, homodimer.

The enzyme catalyses 5-amino-1-(5-phospho-beta-D-ribosyl)imidazole + hydrogencarbonate + ATP = 5-carboxyamino-1-(5-phospho-D-ribosyl)imidazole + ADP + phosphate + 2 H(+). It functions in the pathway purine metabolism; IMP biosynthesis via de novo pathway; 5-amino-1-(5-phospho-D-ribosyl)imidazole-4-carboxylate from 5-amino-1-(5-phospho-D-ribosyl)imidazole (N5-CAIR route): step 1/2. Its function is as follows. Catalyzes the ATP-dependent conversion of 5-aminoimidazole ribonucleotide (AIR) and HCO(3)(-) to N5-carboxyaminoimidazole ribonucleotide (N5-CAIR). This Synechocystis sp. (strain ATCC 27184 / PCC 6803 / Kazusa) protein is N5-carboxyaminoimidazole ribonucleotide synthase.